A 64-amino-acid polypeptide reads, in one-letter code: LTCHTCPYNTCANSETCPAGKNICYQKKWEEHRGERIERSCVANCPEFESSHTSLLCCTTANCD.

5 disulfide bridges follow: C3–C24, C6–C11, C17–C41, C45–C57, and C58–C63.

Belongs to the three-finger toxin family. Ancestral subfamily. As to expression, expressed by the venom gland.

It is found in the secreted. Its function is as follows. Produces peripheral paralysis by blocking neuromuscular transmission at the postsynaptic site. Very weak inhibitor of the endogenous nicotinic acetylcholine receptors (nAChR) in the human rhabdomyosarcoma TE 671 cell line. This neurotoxin is lethal to zebrafish by injection at the back of the dorsolateral region, but is not toxic to mice by intraperitoneal injection. The sequence is that of Long neurotoxin MS5 from Micrurus surinamensis (Surinam coral snake).